A 345-amino-acid polypeptide reads, in one-letter code: Uroporphyrinogen decarboxylase (345 aa).

Substrate-binding positions include 23–27 (RQAGR), Asp73, Tyr149, Thr203, and His319.

It belongs to the uroporphyrinogen decarboxylase family. As to quaternary structure, homodimer.

The protein resides in the cytoplasm. It catalyses the reaction uroporphyrinogen III + 4 H(+) = coproporphyrinogen III + 4 CO2. It participates in porphyrin-containing compound metabolism; protoporphyrin-IX biosynthesis; coproporphyrinogen-III from 5-aminolevulinate: step 4/4. In terms of biological role, catalyzes the decarboxylation of four acetate groups of uroporphyrinogen-III to yield coproporphyrinogen-III. This Vesicomyosocius okutanii subsp. Calyptogena okutanii (strain HA) protein is Uroporphyrinogen decarboxylase.